A 614-amino-acid polypeptide reads, in one-letter code: NEDD8 ultimate buster 1 (614 aa).

Coiled coils occupy residues 36–71 and 151–206; these read LAVK…IERG and NVKA…MVVD. UBA domains follow at residues 373-413, 423-469, and 488-528; these read YIDP…ISNR, EEKE…LLSN, and SPSQ…LAHH. The Nuclear localization signal motif lies at 413–430; that stretch reads RREELAQIRKEEKEKRRR. The interval 426–473 is NEDD8-binding 1; that stretch reads EKRRRRLENVNTLRGMGYSTQAAKQALHQARGNLDDALKVLLSNPHMW. A disordered region spans residues 531 to 590; that stretch reads SLPPDLQFSGEDSSPTPSTSPSDSAGTSSASTDEDMETEAVNEILEDIPEHEEDYLDSTL. Residues 539–561 show a composition bias toward low complexity; the sequence is SGEDSSPTPSTSPSDSAGTSSAS. The tract at residues 549 to 597 is NEDD8-binding 2; it reads TSPSDSAGTSSASTDEDMETEAVNEILEDIPEHEEDYLDSTLEDEEVII. Residues 562–590 show a composition bias toward acidic residues; sequence TDEDMETEAVNEILEDIPEHEEDYLDSTL.

Directly interacts with NEDD8 and PSMD4/S5a, a member of the regulatory subunit of the 26S proteasome. Interacts with AIPL1. The interaction with UBD via UBA domains facilitates the linking of UBD-conjugated target protein to the proteasome complex and accelerates UBD degradation and that of its conjugates.

The protein resides in the nucleus. In terms of biological role, specific down-regulator of the NEDD8 conjugation system. Recruits NEDD8, UBD, and their conjugates to the proteasome for degradation. In Mus musculus (Mouse), this protein is NEDD8 ultimate buster 1 (Nub1).